Consider the following 525-residue polypeptide: UPF0288 protein MA_3997 (525 aa).

This sequence belongs to the UPF0288 family.

The chain is UPF0288 protein MA_3997 from Methanosarcina acetivorans (strain ATCC 35395 / DSM 2834 / JCM 12185 / C2A).